The following is a 131-amino-acid chain: Profilin-5 (131 aa).

Cysteine 13 and cysteine 115 are oxidised to a cystine. An Involved in PIP2 interaction motif is present at residues 81–97 (AVIRGKKGAGGITIKKT). Residue threonine 111 is modified to Phosphothreonine.

The protein belongs to the profilin family. In terms of assembly, occurs in many kinds of cells as a complex with monomeric actin in a 1:1 ratio. Phosphorylated by MAP kinases.

Its subcellular location is the cytoplasm. It is found in the cytoskeleton. Functionally, binds to actin and affects the structure of the cytoskeleton. At high concentrations, profilin prevents the polymerization of actin, whereas it enhances it at low concentrations. The protein is Profilin-5 of Phleum pratense (Common timothy).